We begin with the raw amino-acid sequence, 1266 residues long: Intermembrane phospholipid transporter YhdP (1266 aa).

Residues 1–5 are Cytoplasmic-facing; the sequence is MRRLP. The chain crosses the membrane as a helical span at residues 6–26; that stretch reads GILLLTGAALVVIAALLVSGL. The Periplasmic portion of the chain corresponds to 27-1266; that stretch reads RIALPHLDAW…LRQPRKEKAQ (1240 aa). Residues 94–103 are P-helix; sequence VWQSLLHMRW. The interval 1121–1144 is C-helix_2; the sequence is HAGQLLRLLSVDALMRKLRFDFRD. The segment at 1203 to 1237 is C-helix_1; that stretch reads ISATVGVAAAFAVNPIVGAAVFAASKVLGPLWSKV.

It is found in the cell inner membrane. Involved in outer membrane lipid homeostasis. Likely transports phospholipids between the inner membrane and the outer membrane. It would provide a bridge-like structure that protects phospholipids as they travel across the periplasm. The phosphate-containing molecules are captured along the length of a hydrophobic groove that is continuous along all but the extreme N-terminus of the protein. It also appears to control, directly or indirectly, levels of cyclic enterobacterial common antigen (cyclic ECA), a soluble cyclic ECA molecule present in the periplasm. Functionally, tamB, YdbH and YhdP are redundant, but not equivalent, in performing an essential function for growth and maintaining lipid homeostasis in the outer membrane. The transport functions of TamB and YhdP could be differentiated according to the fatty acid saturation state of the phospholipids, with TamB transporting more unsaturated phospholipids and YhdP more saturated phospholipids. Any of these three proteins is sufficient for growth. The chain is Intermembrane phospholipid transporter YhdP (yhdP) from Escherichia coli (strain K12).